Consider the following 315-residue polypeptide: MLEIEKPIIECIEANEDGTYGKYVVEPLERGYGITLGNALRRILLSSLPGVATTSVKIDGVLHEFSTVQGVKEDVTELILNIKSLALRMNGEGPKVIYIDAKGPGEVTGADIKTDGDVEVVNKNLHIATLDNDGRLYMELTVNKGRGYVTQNKNKSDELPISAIAVDSIYTPVKRVNFTVDNTRVGQITDYDKLTLEIWTNGTIKIDEAISLSAKILIEHFKLFMSLTDNTNDVEIMIEKEDDKKEKVLEMTVEELDLSVRSYNCLKRAGINTVQELATKSMDDMMKVRNLGKKSLEEVERKLKELGLALKLTEE.

The segment at 1-228 is alpha N-terminal domain (alpha-NTD); the sequence is MLEIEKPIIE…EHFKLFMSLT (228 aa). Residues 245-315 are alpha C-terminal domain (alpha-CTD); sequence KEKVLEMTVE…LGLALKLTEE (71 aa).

Belongs to the RNA polymerase alpha chain family. In terms of assembly, homodimer. The RNAP catalytic core consists of 2 alpha, 1 beta, 1 beta' and 1 omega subunit. When a sigma factor is associated with the core the holoenzyme is formed, which can initiate transcription.

It carries out the reaction RNA(n) + a ribonucleoside 5'-triphosphate = RNA(n+1) + diphosphate. DNA-dependent RNA polymerase catalyzes the transcription of DNA into RNA using the four ribonucleoside triphosphates as substrates. In Clostridium beijerinckii (strain ATCC 51743 / NCIMB 8052) (Clostridium acetobutylicum), this protein is DNA-directed RNA polymerase subunit alpha.